Here is a 562-residue protein sequence, read N- to C-terminus: Cytochrome c oxidase subunit 1 (562 aa).

The chain crosses the membrane as a helical span at residues 21–41; that stretch reads TLYFLVLGFLALIVGSLFGPF. H72 contributes to the Fe(II)-heme a binding site. Transmembrane regions (helical) follow at residues 74–94, 105–125, 144–164, 187–207, 227–247, 267–287, 300–320, and 345–365; these read VLNAIVFTQLFAQAIMVYLPA, LMWLSWWMAFIGLVVAALPLL, AFYLGASVFVLSTWVSIYIVL, VVFWLMWFLASLGLVLEAVLF, LFWWTGHPIVYFWLLPAYAII, LAFLLFLLLSTPVGFHHQFAD, VLTLFVAVPSLMTAFTVAASL, and AFVAPVLGLLGFIPGGAGGIV. Residues H233, Y237, H282, and H283 each coordinate Cu cation. Positions 233–237 form a cross-link, 1'-histidyl-3'-tyrosine (His-Tyr); sequence HPIVY. H384 contributes to the heme a3 binding site. 4 helical membrane-spanning segments follow: residues 385–405, 420–440, 471–491, and 527–547; these read FHLQVASLVTLTAMGSLYWLL, LGLAVVWLWFLGMMIMAVGLH, VLAGIVLLVALLLFIYGLFSV, and IGFWFAVAAILVVLAYGPTLV. H386 contacts Fe(II)-heme a.

It belongs to the heme-copper respiratory oxidase family. The cofactor is heme. It depends on Cu cation as a cofactor.

It localises to the cell membrane. The catalysed reaction is 4 Fe(II)-[cytochrome c] + O2 + 8 H(+)(in) = 4 Fe(III)-[cytochrome c] + 2 H2O + 4 H(+)(out). The protein operates within energy metabolism; oxidative phosphorylation. The protein is Cytochrome c oxidase subunit 1 (cbaA) of Thermus thermophilus (strain ATCC 27634 / DSM 579 / HB8).